A 274-amino-acid polypeptide reads, in one-letter code: NH(3)-dependent NAD(+) synthetase (274 aa).

G46–S53 contributes to the ATP binding site. A Mg(2+)-binding site is contributed by D52. Deamido-NAD(+) is bound at residue R140. T160 is an ATP binding site. E165 provides a ligand contact to Mg(2+). K173 and D180 together coordinate deamido-NAD(+). K189 and T211 together coordinate ATP. H260–K261 contacts deamido-NAD(+).

The protein belongs to the NAD synthetase family. In terms of assembly, homodimer.

The catalysed reaction is deamido-NAD(+) + NH4(+) + ATP = AMP + diphosphate + NAD(+) + H(+). It participates in cofactor biosynthesis; NAD(+) biosynthesis; NAD(+) from deamido-NAD(+) (ammonia route): step 1/1. In terms of biological role, catalyzes the ATP-dependent amidation of deamido-NAD to form NAD. Uses ammonia as a nitrogen source. The polypeptide is NH(3)-dependent NAD(+) synthetase (Streptococcus pyogenes serotype M2 (strain MGAS10270)).